Here is a 285-residue protein sequence, read N- to C-terminus: MAGLDLGTTSRYVHNVDGGGGGQFTTDNHHEDDGGAGGNHHHHHHNHNHHQGLDLIASNDNSGLGGGGGGGSGDLVMRRPRGRPAGSKNKPKPPVIVTRESANTLRAHILEVGSGCDVFECISTYARRRQRGICVLSGTGTVTNVSIRQPTAAGAVVTLRGTFEILSLSGSFLPPPAPPGATSLTIFLAGAQGQVVGGNVVGELMAAGPVMVMAASFTNVAYERLPLDEHEEHLQSGGGGGGGNMYSEATGGGGGLPFFNLPMSMPQIGVESWQGNHAGAGRAPF.

The tract at residues 17–95 (DGGGGGQFTT…GSKNKPKPPV (79 aa)) is disordered. Basic residues predominate over residues 39–50 (NHHHHHHNHNHH). Residues 63–73 (GLGGGGGGGSG) are compositionally biased toward gly residues. Positions 78 to 90 (RRPRGRPAGSKNK) form a DNA-binding region, a.T hook. In terms of domain architecture, PPC spans 102–238 (ANTLRAHILE…EHEEHLQSGG (137 aa)).

As to expression, preferentially expressed in roots, but also in flowers and leaves. Detected in the inflorescence meristem, floral primordia and developing reproductive organs.

Its subcellular location is the nucleus. The protein resides in the nucleoplasm. In terms of biological role, transcription factor that specifically binds AT-rich DNA sequences related to the nuclear matrix attachment regions (MARs). Binds to the MARs present in the ETTIN (ETT) promoter leading to a negative regulation of its gene expression. Functions as a molecular node downstream of the homeotic protein AGAMOUS (AG), regulating patterning and differentiation of reproductive organs. Acts as a chromatin remodeling factor that modifies the architecture of ETTIN (ETT) chromatin by modulating H3 methylation leading to the regulation of ETT expression. Seems to be involved in the regulation of a set of reproductives genes including CRABS CLAW (CRC), JAGGED (JAG) and KNUCKLES (KNU). The polypeptide is AT-hook motif nuclear-localized protein 21 (Arabidopsis thaliana (Mouse-ear cress)).